The sequence spans 202 residues: Orotate phosphoribosyltransferase (202 aa).

5-phospho-alpha-D-ribose 1-diphosphate contacts are provided by residues Arg-94, Lys-98, His-100, and 120 to 128 (EDLISTGGS). Ser-124 contributes to the orotate binding site.

It belongs to the purine/pyrimidine phosphoribosyltransferase family. PyrE subfamily. Homodimer. The cofactor is Mg(2+).

The enzyme catalyses orotidine 5'-phosphate + diphosphate = orotate + 5-phospho-alpha-D-ribose 1-diphosphate. It participates in pyrimidine metabolism; UMP biosynthesis via de novo pathway; UMP from orotate: step 1/2. Catalyzes the transfer of a ribosyl phosphate group from 5-phosphoribose 1-diphosphate to orotate, leading to the formation of orotidine monophosphate (OMP). The protein is Orotate phosphoribosyltransferase of Oceanobacillus iheyensis (strain DSM 14371 / CIP 107618 / JCM 11309 / KCTC 3954 / HTE831).